We begin with the raw amino-acid sequence, 316 residues long: Formimidoylglutamase (316 aa).

His127, Asp156, His158, Asp160, Asp247, and Asp249 together coordinate Mn(2+).

The protein belongs to the arginase family. Mn(2+) is required as a cofactor.

It catalyses the reaction N-formimidoyl-L-glutamate + H2O = formamide + L-glutamate. It functions in the pathway amino-acid degradation; L-histidine degradation into L-glutamate; L-glutamate from N-formimidoyl-L-glutamate (hydrolase route): step 1/1. Its function is as follows. Catalyzes the conversion of N-formimidoyl-L-glutamate to L-glutamate and formamide. In Cupriavidus pinatubonensis (strain JMP 134 / LMG 1197) (Cupriavidus necator (strain JMP 134)), this protein is Formimidoylglutamase.